The sequence spans 238 residues: ATP synthase subunit a, chloroplastic (238 aa).

The next 5 membrane-spanning stretches (helical) occupy residues 27–47, 86–106, 125–145, 190–210, and 211–231; these read GQVLITSWVVLGILAVLSFLG, VPFLGTIFLFIFVSNWSGALL, INTTVALALLTSISYFYAGIS, LVVGVLVALVPLIIPIPIMLL, and GVFTSAIQALVFATLAGAYIN.

This sequence belongs to the ATPase A chain family. F-type ATPases have 2 components, F(1) - the catalytic core - and F(0) - the membrane proton channel. F(1) has five subunits: alpha(3), beta(3), gamma(1), delta(1), epsilon(1). F(0) has four main subunits: a(1), b(1), b'(1) and c(10-14). The alpha and beta chains form an alternating ring which encloses part of the gamma chain. F(1) is attached to F(0) by a central stalk formed by the gamma and epsilon chains, while a peripheral stalk is formed by the delta, b and b' chains.

Its subcellular location is the plastid. The protein localises to the chloroplast thylakoid membrane. In terms of biological role, f(1)F(0) ATP synthase produces ATP from ADP in the presence of a proton or sodium gradient. F-type ATPases consist of two structural domains, F(1) containing the extramembraneous catalytic core and F(0) containing the membrane proton channel, linked together by a central stalk and a peripheral stalk. During catalysis, ATP synthesis in the catalytic domain of F(1) is coupled via a rotary mechanism of the central stalk subunits to proton translocation. The protein is ATP synthase subunit a, chloroplastic of Chlamydomonas reinhardtii (Chlamydomonas smithii).